We begin with the raw amino-acid sequence, 247 residues long: Spermatogenesis-associated protein 46 (247 aa).

A disordered region spans residues 125–164; the sequence is QRDSCLPEDTADSVCSSSPSPENTCPREATKKSRPGPDTT. Residues 137–147 show a composition bias toward polar residues; that stretch reads SVCSSSPSPEN.

The protein localises to the nucleus membrane. Plays a role in spermiogenesis and fertilization. The polypeptide is Spermatogenesis-associated protein 46 (SPATA46) (Bos taurus (Bovine)).